The sequence spans 116 residues: UPF0102 protein IL0423 (116 aa).

This sequence belongs to the UPF0102 family.

This is UPF0102 protein IL0423 from Idiomarina loihiensis (strain ATCC BAA-735 / DSM 15497 / L2-TR).